Reading from the N-terminus, the 232-residue chain is Ashwin (232 aa).

Serine 112, serine 182, serine 184, serine 189, and serine 193 each carry phosphoserine. Residues 163–232 are disordered; it reads KMEHNNNDTQ…KRKIQHVTWP (70 aa). Phosphothreonine occurs at positions 197 and 198. Positions 206–224 are enriched in basic and acidic residues; sequence APKEEAEATNHLKPPEVKR.

Belongs to the ashwin family. Component of the tRNA-splicing ligase complex.

Its subcellular location is the nucleus. The polypeptide is Ashwin (Mus musculus (Mouse)).